The chain runs to 442 residues: Trigger factor (442 aa).

The PPIase FKBP-type domain maps to 163 to 248 (YDRVTINYCI…IIKIEKKQEL (86 aa)).

This sequence belongs to the FKBP-type PPIase family. Tig subfamily.

It is found in the cytoplasm. The catalysed reaction is [protein]-peptidylproline (omega=180) = [protein]-peptidylproline (omega=0). Involved in protein export. Acts as a chaperone by maintaining the newly synthesized protein in an open conformation. Functions as a peptidyl-prolyl cis-trans isomerase. The polypeptide is Trigger factor (Buchnera aphidicola subsp. Acyrthosiphon pisum (strain Tuc7)).